Reading from the N-terminus, the 1014-residue chain is MICAL-like protein 2 (1014 aa).

The region spanning 1 to 107 is the Calponin-homology (CH) domain; it reads MAAIKALQEW…YVSQYYNYFH (107 aa). Residues 1–261 are forms an intramolecular interaction with the C-terminal coiled coil domain keeping the protein in a closed conformation; that stretch reads MAAIKALQEW…KLSNLASRQP (261 aa). 3 positions are modified to phosphoserine: Ser110, Ser144, and Ser154. A disordered region spans residues 114 to 181; that stretch reads GMAGMKRPSS…PSPKAAPGTV (68 aa). Positions 187 to 249 constitute an LIM zinc-binding domain; it reads SICGVCGKHV…THHSSEAVSV (63 aa). At Ser250 the chain carries Phosphoserine. The necessary and sufficient for interaction with actinins stretch occupies residues 262 to 394; it reads GGGIADTRPI…QGQAASKGVK (133 aa). Residues 262 to 810 are mediates targeting to the cell plasma membrane; the sequence is GGGIADTRPI…QDDQTRSCKE (549 aa). 2 disordered regions span residues 311 to 450 and 609 to 780; these read LTPP…SRVP and TLPK…RRKK. Over residues 332 to 355 the composition is skewed to polar residues; that stretch reads STVTTTSANSKATTHVTNSSPVGW. The span at 356 to 368 shows a compositional bias: low complexity; it reads SSSAQSSTGTSGS. Positions 384–398 are enriched in polar residues; sequence PQGQAASKGVKTQLN. Low complexity-rich tracts occupy residues 399–419 and 438–447; these read SSTDSSSTAPTPAWTSSSSRT and PASSSSSHAS. Composition is skewed to polar residues over residues 624 to 633 and 646 to 656; these read LSHSTTQAFS and VGSTSWTSVSL. Composition is skewed to basic and acidic residues over residues 701-711 and 720-737; these read EGWRARLKPVD and LEQKEPVLAEPRAGDTPR. The segment covering 747–758 has biased composition (polar residues); sequence IHITLTPIQQKR. Thr759 carries the phosphothreonine modification. Phosphoserine is present on residues Ser773 and Ser837. Positions 811–918 are forms an intramolecular interaction with the N-terminal Calponin-homology and LIM zinc-binding domains-containing region keeping the protein in a closed conformation; that stretch reads KTATWGTRES…LMYKSKDQCL (108 aa). The region spanning 838–985 is the bMERB domain; that stretch reads PVRLHPNYIS…EQEEDQMLES (148 aa). The stretch at 845-885 forms a coiled coil; that stretch reads YISQEELQRQLQDIERQLDALELRGVELEKRLRAAEGDASE. The interval 918–1014 is mediates interaction with RAB13 and is required for transition from the closed to the open conformation; it reads LEERQLDLQG…WSSKSKSGQT (97 aa).

In terms of assembly, interacts with RAB13 (GTP-bound form); competes with RAB8A and is involved in tight junctions assembly. Interacts with RAB8A; competes with RAB13 and is involved in E-cadherin endocytic recycling. Interacts with RAB8B. Interacts (preferentially in opened conformation) with ACTN1 and ACTN4; stimulated by RAB13 activation. Interacts (via calponin-homology (CH) domain) with the filamins FLNA, FLNB and FLNC (via actin-binding domain).

It is found in the cell membrane. The protein resides in the cell junction. It localises to the tight junction. Its subcellular location is the recycling endosome. The protein localises to the cell projection. It is found in the neuron projection. The protein resides in the cytoplasm. It localises to the cytoskeleton. In terms of biological role, effector of small Rab GTPases which is involved in junctional complexes assembly through the regulation of cell adhesion molecules transport to the plasma membrane and actin cytoskeleton reorganization. Regulates the endocytic recycling of occludins, claudins and E-cadherin to the plasma membrane and may thereby regulate the establishment of tight junctions and adherens junctions. In parallel, may regulate actin cytoskeleton reorganization directly through interaction with F-actin or indirectly through actinins and filamins. Most probably involved in the processes of epithelial cell differentiation, cell spreading and neurite outgrowth. Undergoes liquid-liquid phase separation to form tubular recycling endosomes. Plays 2 sequential roles in the biogenesis of tubular recycling endosomes: first organizes phase separation and then the closed form formed by interaction with RAB8A promotes endosomal tubulation. This Rattus norvegicus (Rat) protein is MICAL-like protein 2 (Micall2).